Reading from the N-terminus, the 348-residue chain is MAMIPSISKLLFVAICLFVHMSVSFGDFSIVGYSQDDLTSTERLIQLFNSWMLNHNKFYENVDEKLYRFEIFKDNLNYIDETNKKNNSYWLGLNEFADLSNDEFNEKYVGSLIDATIEQSYDEEFINEDTVNLPENVDWRKKGAVTPVRHQGSCGSCWAFSAVATVEGINKIRTGKLVELSEQELVDCERRSHGCKGGYPPYALEYVAKNGIHLRSKYPYKAKQGTCRAKQVGGPIVKTSGVGRVQPNNEGNLLNAIAKQPVSVVVESKGRPFQLYKGGIFEGPCGTKVDHAVTAVGYGKSGGKGYILIKNSWGTAWGEKGYIRIKRAPGNSPGVCGLYKSSYYPTKN.

A signal peptide spans methionine 1–cysteine 16. A propeptide spans leucine 17–asparagine 132 (activation peptide). N-linked (GlcNAc...) asparagine glycosylation occurs at asparagine 86. 3 disulfide bridges follow: cysteine 154–cysteine 195, cysteine 188–cysteine 227, and cysteine 285–cysteine 336. Cysteine 157 is a catalytic residue. E64 is bound at residue cysteine 157. Catalysis depends on residues histidine 291 and asparagine 311.

It belongs to the peptidase C1 family. As to quaternary structure, monomer.

The catalysed reaction is Hydrolysis of proteins with broad specificity for peptide bonds, similar to those of papain and chymopapain.. Repressed by the active-site-directed cysteine protease inhibitor E64 (L-trans-epoxysuccinyl-leucylamide-(4-guanido)-butane) produced by Aspergillus japonicus. Its function is as follows. Cysteine proteinase with a high level of diversity in substrate specificity. This Carica papaya (Papaya) protein is Caricain.